A 213-amino-acid chain; its full sequence is 3,4-dihydroxy-2-butanone 4-phosphate synthase (213 aa).

Residues 37–38 (RE), aspartate 42, 150–154 (RPGHT), and glutamate 174 each bind D-ribulose 5-phosphate. Glutamate 38 contributes to the Mg(2+) binding site. Histidine 153 contributes to the Mg(2+) binding site.

Belongs to the DHBP synthase family. In terms of assembly, homodimer. Mg(2+) is required as a cofactor. Requires Mn(2+) as cofactor.

The catalysed reaction is D-ribulose 5-phosphate = (2S)-2-hydroxy-3-oxobutyl phosphate + formate + H(+). Its pathway is cofactor biosynthesis; riboflavin biosynthesis; 2-hydroxy-3-oxobutyl phosphate from D-ribulose 5-phosphate: step 1/1. Functionally, catalyzes the conversion of D-ribulose 5-phosphate to formate and 3,4-dihydroxy-2-butanone 4-phosphate. This is 3,4-dihydroxy-2-butanone 4-phosphate synthase from Clostridium botulinum (strain Langeland / NCTC 10281 / Type F).